Here is a 278-residue protein sequence, read N- to C-terminus: Glycerophosphodiester phosphodiesterase GpdQ (278 aa).

D8, H10, D50, N80, H156, H195, and H197 together coordinate Fe cation.

It belongs to the cyclic nucleotide phosphodiesterase class-III family. It depends on Fe(2+) as a cofactor.

The catalysed reaction is a sn-glycero-3-phosphodiester + H2O = an alcohol + sn-glycerol 3-phosphate + H(+). The enzyme catalyses sn-glycero-3-phosphoethanolamine + H2O = ethanolamine + sn-glycerol 3-phosphate + H(+). Its function is as follows. Catalyzes the hydrolysis of the 3'-5' phosphodiester bond of glycerophosphodiesters such as glycerophosphorylethanolamine (GPE), a typical phospholipid metabolite. The protein is Glycerophosphodiester phosphodiesterase GpdQ of Enterobacter lignolyticus (strain SCF1).